A 230-amino-acid chain; its full sequence is Orotidine 5'-phosphate decarboxylase (230 aa).

Substrate contacts are provided by residues Asp10, Lys32, 59 to 68 (DLKFHDIPRT), Thr116, Arg177, Gln186, Gly206, and Arg207. Catalysis depends on Lys61, which acts as the Proton donor.

The protein belongs to the OMP decarboxylase family. Type 1 subfamily. Homodimer.

It carries out the reaction orotidine 5'-phosphate + H(+) = UMP + CO2. Its pathway is pyrimidine metabolism; UMP biosynthesis via de novo pathway; UMP from orotate: step 2/2. Functionally, catalyzes the decarboxylation of orotidine 5'-monophosphate (OMP) to uridine 5'-monophosphate (UMP). This is Orotidine 5'-phosphate decarboxylase from Methylacidiphilum infernorum (isolate V4) (Methylokorus infernorum (strain V4)).